A 540-amino-acid polypeptide reads, in one-letter code: Chaperonin GroEL (540 aa).

Residues 29 to 32, 86 to 90, glycine 413, 476 to 478, and aspartate 492 contribute to the ATP site; these read TLGP, DGTTT, and NAA.

The protein belongs to the chaperonin (HSP60) family. As to quaternary structure, forms a cylinder of 14 subunits composed of two heptameric rings stacked back-to-back. Interacts with the co-chaperonin GroES.

The protein resides in the cytoplasm. The catalysed reaction is ATP + H2O + a folded polypeptide = ADP + phosphate + an unfolded polypeptide.. Functionally, together with its co-chaperonin GroES, plays an essential role in assisting protein folding. The GroEL-GroES system forms a nano-cage that allows encapsulation of the non-native substrate proteins and provides a physical environment optimized to promote and accelerate protein folding. The protein is Chaperonin GroEL of Streptococcus pneumoniae (strain ATCC 700669 / Spain 23F-1).